The primary structure comprises 481 residues: GDP-fucose protein O-fucosyltransferase 3 (481 aa).

Residues methionine 1–lysine 8 lie on the Cytoplasmic side of the membrane. The chain crosses the membrane as a helical; Signal-anchor for type II membrane protein span at residues leucine 9 to glutamate 31. Over leucine 32–aspartate 481 the chain is Lumenal. N-linked (GlcNAc...) asparagine glycosylation is found at asparagine 110, asparagine 168, and asparagine 318. Cysteine 389 and cysteine 392 are oxidised to a cystine. N-linked (GlcNAc...) asparagine glycosylation is present at asparagine 468.

The protein belongs to the glycosyltransferase 10 family. In terms of tissue distribution, widely expressed, with a higher expression in liver and thymus.

It localises to the endoplasmic reticulum membrane. It carries out the reaction L-threonyl-[protein] + GDP-beta-L-fucose = 3-O-(alpha-L-fucosyl)-L-threonyl-[protein] + GDP + H(+). It catalyses the reaction L-seryl-[protein] + GDP-beta-L-fucose = 3-O-(alpha-L-fucosyl)-L-seryl-[protein] + GDP + H(+). Its pathway is protein modification; protein glycosylation. In terms of biological role, protein O-fucosyltransferase that specifically catalyzes O-fucosylation of serine or threonine residues in EMI domains of target proteins, such as MMRN1, MMRN2 and EMID1. Attaches fucose through an O-glycosidic linkage. O-fucosylation of EMI domain-containing proteins may be required for facilitating protein folding and secretion. May also show alpha-(1,3)-fucosyltransferase activity toward the innermost N-acetyl glucosamine (GlcNAc) residue in biantennary N-glycan acceptors. However, this was tested with a library of synthetic substrates and this activity is unsure in vivo. May be involved in biosynthesis of Lewis X-carrying biantennary N-glycans that regulate neuron stem cell self-renewal during brain development. This Mus musculus (Mouse) protein is GDP-fucose protein O-fucosyltransferase 3.